We begin with the raw amino-acid sequence, 301 residues long: Glycosyltransferase GlyG (301 aa).

Belongs to the glycosyltransferase 2 family.

Its pathway is protein modification; protein glycosylation. Its function is as follows. Involved in the polymorphic O-glycosylation of the serine-rich repeat protein PsrP. Catalyzes the third step in glycosylation PsrP in this bacteria. Transfers glucose from UDP-glucose to the terminal glucose moiety of already-glycosylated PsrP (using truncated substrates with PsrP SSR1-GlcNAc-Glc). Has a marked preference for PsrP substrate that has already been modified by GlcNAc and glucose. In vitro has hydrolytic activity against UDP-glucose and to a lesser extent against UDP-galactose. In terms of biological role, also catalyzes the fourth step in glycosylation of the serine-rich repeat protein PsrP in this bacteria. Can transfer the sugar from UDP-glucose (and much less well from UDP-galactose) to the terminal sugar moiety of PsrP-GlcNAc-Glc-Gal or of PsrP-GlcNAc-Glc-Glc. The protein is Glycosyltransferase GlyG of Streptococcus pneumoniae serotype 4 (strain ATCC BAA-334 / TIGR4).